The chain runs to 147 residues: Hemoglobin subunit epsilon (147 aa).

Positions 3 to 147 (HFTAEEKAAI…VAIALGHKYH (145 aa)) constitute a Globin domain. Phosphoserine occurs at positions 14 and 51. The heme b site is built by H64 and H93.

It belongs to the globin family. Heterotetramer of two alpha chains and two epsilon chains in early embryonic hemoglobin Gower-2; two zeta chains and two epsilon chains in early embryonic hemoglobin Gower-1. As to expression, red blood cells.

Its function is as follows. The epsilon chain is a beta-type chain of early mammalian embryonic hemoglobin. The chain is Hemoglobin subunit epsilon (HBE1) from Saimiri boliviensis boliviensis (Bolivian squirrel monkey).